The sequence spans 236 residues: Lipoprotein signal peptidase (236 aa).

Helical transmembrane passes span 8–28 (FYGI…WVYF), 44–64 (WFKL…FGFT), 68–88 (VLLT…IWNL), and 98–118 (LLWG…DSIF). Residues Asp141 and Asp174 contribute to the active site. The chain crosses the membrane as a helical span at residues 166 to 186 (CLPVFNLADVAILAGVALIVL).

This sequence belongs to the peptidase A8 family.

Its subcellular location is the cell inner membrane. It catalyses the reaction Release of signal peptides from bacterial membrane prolipoproteins. Hydrolyzes -Xaa-Yaa-Zaa-|-(S,diacylglyceryl)Cys-, in which Xaa is hydrophobic (preferably Leu), and Yaa (Ala or Ser) and Zaa (Gly or Ala) have small, neutral side chains.. It functions in the pathway protein modification; lipoprotein biosynthesis (signal peptide cleavage). Functionally, this protein specifically catalyzes the removal of signal peptides from prolipoproteins. The protein is Lipoprotein signal peptidase of Amoebophilus asiaticus (strain 5a2).